The following is a 260-amino-acid chain: Thiazole synthase (260 aa).

The active-site Schiff-base intermediate with DXP is the K100. Residues G162, 188-189 (AG), and 210-211 (NT) contribute to the 1-deoxy-D-xylulose 5-phosphate site.

Belongs to the ThiG family. Homotetramer. Forms heterodimers with either ThiH or ThiS.

The protein resides in the cytoplasm. The enzyme catalyses [ThiS sulfur-carrier protein]-C-terminal-Gly-aminoethanethioate + 2-iminoacetate + 1-deoxy-D-xylulose 5-phosphate = [ThiS sulfur-carrier protein]-C-terminal Gly-Gly + 2-[(2R,5Z)-2-carboxy-4-methylthiazol-5(2H)-ylidene]ethyl phosphate + 2 H2O + H(+). The protein operates within cofactor biosynthesis; thiamine diphosphate biosynthesis. Functionally, catalyzes the rearrangement of 1-deoxy-D-xylulose 5-phosphate (DXP) to produce the thiazole phosphate moiety of thiamine. Sulfur is provided by the thiocarboxylate moiety of the carrier protein ThiS. In vitro, sulfur can be provided by H(2)S. In Wolinella succinogenes (strain ATCC 29543 / DSM 1740 / CCUG 13145 / JCM 31913 / LMG 7466 / NCTC 11488 / FDC 602W) (Vibrio succinogenes), this protein is Thiazole synthase.